The chain runs to 211 residues: Agamous-like MADS-box protein AGL12 (211 aa).

Residues 3–57 enclose the MADS-box domain; it reads RGKIQLKRIENPVHRQVTFCKRRTGLLKKAKELSVLCDAEIGVVIFSPQGKLFEL. Residues 95–185 enclose the K-box domain; that stretch reads NLDPKDEINV…LEKIEENNNS (91 aa).

Preferentially expressed in roots. In root meristem, expressed in external cells of columella, lateral root cap and atrichoblasts. In mature root, expressed in the central cylinder. Expressed in leaf vasculature, young floral meristems and nectaries.

The protein localises to the nucleus. In terms of biological role, probable transcription activator that regulates root development by controlling cell proliferation in root meristem. May mediate responses to auxin in the root. May act as promoter of the flowering transition through up-regulation of SOC, FT and LFY. The polypeptide is Agamous-like MADS-box protein AGL12 (Arabidopsis thaliana (Mouse-ear cress)).